Here is a 195-residue protein sequence, read N- to C-terminus: Guanylate kinase (195 aa).

The region spanning 10–189 (GRLIVFSAPS…TVDAVATRIA (180 aa)) is the Guanylate kinase-like domain. An ATP-binding site is contributed by 17 to 24 (APSGTGKS).

Belongs to the guanylate kinase family.

The protein localises to the cytoplasm. It catalyses the reaction GMP + ATP = GDP + ADP. In terms of biological role, essential for recycling GMP and indirectly, cGMP. The chain is Guanylate kinase from Chlorobaculum tepidum (strain ATCC 49652 / DSM 12025 / NBRC 103806 / TLS) (Chlorobium tepidum).